Consider the following 221-residue polypeptide: GTP cyclohydrolase 1 (221 aa).

Cysteine 109, histidine 112, and cysteine 180 together coordinate Zn(2+).

The protein belongs to the GTP cyclohydrolase I family. Toroid-shaped homodecamer, composed of two pentamers of five dimers.

The enzyme catalyses GTP + H2O = 7,8-dihydroneopterin 3'-triphosphate + formate + H(+). It functions in the pathway cofactor biosynthesis; 7,8-dihydroneopterin triphosphate biosynthesis; 7,8-dihydroneopterin triphosphate from GTP: step 1/1. This Sodalis glossinidius (strain morsitans) protein is GTP cyclohydrolase 1.